We begin with the raw amino-acid sequence, 301 residues long: Probable alpha-L-glutamate ligase (301 aa).

Residues leucine 104–glutamate 287 form the ATP-grasp domain. ATP is bound by residues lysine 141, glutamate 178 to phenylalanine 179, aspartate 187, and arginine 211 to asparagine 213. The Mg(2+) site is built by aspartate 248, glutamate 260, and asparagine 262. 3 residues coordinate Mn(2+): aspartate 248, glutamate 260, and asparagine 262.

Belongs to the RimK family. It depends on Mg(2+) as a cofactor. Mn(2+) is required as a cofactor.

This chain is Probable alpha-L-glutamate ligase, found in Syntrophotalea carbinolica (strain DSM 2380 / NBRC 103641 / GraBd1) (Pelobacter carbinolicus).